Here is a 65-residue protein sequence, read N- to C-terminus: Large ribosomal subunit protein bL35 (65 aa).

A disordered region spans residues 1-29; the sequence is MPKMKTHSGAKKRFKLTGSGKVKRQQANR.

It belongs to the bacterial ribosomal protein bL35 family.

The chain is Large ribosomal subunit protein bL35 from Kocuria rhizophila (strain ATCC 9341 / DSM 348 / NBRC 103217 / DC2201).